A 940-amino-acid polypeptide reads, in one-letter code: UvrABC system protein A (940 aa).

31-38 (GLSGSGKS) serves as a coordination point for ATP. Residues 253 to 280 (CPICGYSMRELEPRLFSFNNPAGACPTC) form a C4-type zinc finger. ABC transporter domains follow at residues 310–587 (WDRR…PESL) and 607–937 (ANPE…RFLK). 640 to 647 (GVSGSGKS) contacts ATP. A C4-type zinc finger spans residues 740-766 (CEACQGDGVIKVEMHFLPDIYVPCDQC).

The protein belongs to the ABC transporter superfamily. UvrA family. Forms a heterotetramer with UvrB during the search for lesions.

It localises to the cytoplasm. Functionally, the UvrABC repair system catalyzes the recognition and processing of DNA lesions. UvrA is an ATPase and a DNA-binding protein. A damage recognition complex composed of 2 UvrA and 2 UvrB subunits scans DNA for abnormalities. When the presence of a lesion has been verified by UvrB, the UvrA molecules dissociate. The sequence is that of UvrABC system protein A from Escherichia coli O6:H1 (strain CFT073 / ATCC 700928 / UPEC).